Consider the following 124-residue polypeptide: T cell receptor beta variable 13 (124 aa).

A signal peptide spans 1-31; the sequence is MLSPDLPDSAWNTRLLCRVMLCLLGAGSVAA. The region spanning 32-124 is the Ig-like domain; that stretch reads GVIQSPRHLI…SALYFCASSL (93 aa). A disulfide bridge links Cys-52 with Cys-120. Asn-106 carries N-linked (GlcNAc...) asparagine glycosylation.

In terms of assembly, alpha-beta TR is a heterodimer composed of an alpha and beta chain; disulfide-linked. The alpha-beta TR is associated with the transmembrane signaling CD3 coreceptor proteins to form the TR-CD3 (TcR or TCR). The assembly of alpha-beta TR heterodimers with CD3 occurs in the endoplasmic reticulum where a single alpha-beta TR heterodimer associates with one CD3D-CD3E heterodimer, one CD3G-CD3E heterodimer and one CD247 homodimer forming a stable octameric structure. CD3D-CD3E and CD3G-CD3E heterodimers preferentially associate with TR alpha and TR beta chains, respectively. The association of the CD247 homodimer is the last step of TcR assembly in the endoplasmic reticulum and is required for transport to the cell surface.

Its subcellular location is the cell membrane. In terms of biological role, v region of the variable domain of T cell receptor (TR) beta chain that participates in the antigen recognition. Alpha-beta T cell receptors are antigen specific receptors which are essential to the immune response and are present on the cell surface of T lymphocytes. Recognize peptide-major histocompatibility (MH) (pMH) complexes that are displayed by antigen presenting cells (APC), a prerequisite for efficient T cell adaptive immunity against pathogens. Binding of alpha-beta TR to pMH complex initiates TR-CD3 clustering on the cell surface and intracellular activation of LCK that phosphorylates the ITAM motifs of CD3G, CD3D, CD3E and CD247 enabling the recruitment of ZAP70. In turn ZAP70 phosphorylates LAT, which recruits numerous signaling molecules to form the LAT signalosome. The LAT signalosome propagates signal branching to three major signaling pathways, the calcium, the mitogen-activated protein kinase (MAPK) kinase and the nuclear factor NF-kappa-B (NF-kB) pathways, leading to the mobilization of transcription factors that are critical for gene expression and essential for T cell growth and differentiation. The T cell repertoire is generated in the thymus, by V-(D)-J rearrangement. This repertoire is then shaped by intrathymic selection events to generate a peripheral T cell pool of self-MH restricted, non-autoaggressive T cells. Post-thymic interaction of alpha-beta TR with the pMH complexes shapes TR structural and functional avidity. The protein is T cell receptor beta variable 13 of Homo sapiens (Human).